The chain runs to 329 residues: DNA-directed RNA polymerase subunit alpha (329 aa).

The alpha N-terminal domain (alpha-NTD) stretch occupies residues 1-235 (MQGSVTEFLK…EQLEAFVDLR (235 aa)). The segment at 249–329 (FDPILLRPVD…NWPPASIADE (81 aa)) is alpha C-terminal domain (alpha-CTD).

Belongs to the RNA polymerase alpha chain family. Homodimer. The RNAP catalytic core consists of 2 alpha, 1 beta, 1 beta' and 1 omega subunit. When a sigma factor is associated with the core the holoenzyme is formed, which can initiate transcription.

The catalysed reaction is RNA(n) + a ribonucleoside 5'-triphosphate = RNA(n+1) + diphosphate. Its function is as follows. DNA-dependent RNA polymerase catalyzes the transcription of DNA into RNA using the four ribonucleoside triphosphates as substrates. The protein is DNA-directed RNA polymerase subunit alpha of Enterobacter sp. (strain 638).